The sequence spans 1096 residues: Inactive phospholipase C-like protein 1 (1096 aa).

The segment at 1–101 is disordered; it reads MAEGAASREA…KKTVSFSSMP (101 aa). A compositionally biased stretch (low complexity) spans 26–41; that stretch reads GADAASGDAAPEASGG. Phosphoserine is present on residues S48 and S78. The interval 83-222 is interaction with PPP1C; that stretch reads PSNQKCGGRK…NIWVSGLRYL (140 aa). A Phosphothreonine modification is found at T94. A Phosphoserine modification is found at S96. The PH domain maps to 114–224; that stretch reads SFMQAGCELK…WVSGLRYLVS (111 aa). The 145-residue stretch at 399 to 543 folds into the PI-PLC X-box domain; that stretch reads QDMTQPLSHY…LKHMIIVKGK (145 aa). Positions 544–568 are interaction with GABA A beta subunit; that stretch reads KLPSESDLLEGEVTDEDEEAEMSRR. T557 is modified (phosphothreonine). A Phosphoserine modification is found at S570. The PI-PLC Y-box domain maps to 586–702; the sequence is LSDLVSICKS…GYVLRPSIMR (117 aa). Residues 702–831 form the C2 domain; sequence RDEVSYFSAN…PGYRHVPLRS (130 aa). Residues 1040 to 1060 are a coiled coil; the sequence is DLLKNAKNEAVENIKQIQLAC. Residues 1067–1096 are disordered; that stretch reads KGPGSAAEAKGKRSLEAIEEKESSEENGKL. The segment covering 1075-1096 has biased composition (basic and acidic residues); that stretch reads AKGKRSLEAIEEKESSEENGKL. At S1080 the chain carries Phosphoserine.

Belongs to the PRIP family. As to quaternary structure, interacts with PPP2CA, GABA receptor beta subunits, GABA receptor gamma-2 subunits. Interacts with Ins(1,4,5)P3, Ins(1,4,5,6)P4, GABARAP, and PPP1C. May form a ternary complex with GABA receptor beta subunit and GABARAP. The formation of a ternary complex with GABA receptor beta subunit and GABARAP could be the key step for facilitating the association of GABARAP with the GABA receptor gamma-2 subunit and to allow it to be transported at the right destination. Post-translationally, phosphorylation of Thr-94 resulted in dissociation of PPP1C from PRIP1. In vitro, phosphorylated by the catalytic subunit of PKA. Expressed in brain. Found in the granular cell and Purkinje cell layers in the cerebellum; and in the hippocampal pyramidal cells, dentate granule cells and pyramidal granule cells of the cerebral cortex in the cerebrum.

Its subcellular location is the cytoplasm. Functionally, involved in an inositol phospholipid-based intracellular signaling cascade. Shows no PLC activity to phosphatidylinositol 4,5-bisphosphate and phosphatidylinositol. Component in the phospho-dependent endocytosis process of GABA A receptor. Acts as an inhibitor of PPP1C. The chain is Inactive phospholipase C-like protein 1 (Plcl1) from Rattus norvegicus (Rat).